Reading from the N-terminus, the 218-residue chain is Carboxylesterase 2 (218 aa).

Active-site charge relay system residues include Ser114, Asp168, and His199.

It belongs to the AB hydrolase superfamily. AB hydrolase 2 family. As to quaternary structure, homodimer.

It carries out the reaction a carboxylic ester + H2O = an alcohol + a carboxylate + H(+). Hydrolyzes carboxylic ester bonds with relatively broad substrate specificity. The polypeptide is Carboxylesterase 2 (estB) (Pseudomonas fluorescens).